Here is a 309-residue protein sequence, read N- to C-terminus: Foldase protein PrsA (309 aa).

A signal peptide spans 1–22 (MKTRSKLAAGFLTLMSVATLAA). Cysteine 23 carries N-palmitoyl cysteine lipidation. Cysteine 23 carries the S-diacylglycerol cysteine lipid modification. The PpiC domain occupies 146–241 (TPETSVQVIK…TSYYIIKVTD (96 aa)).

This sequence belongs to the PrsA family.

The protein resides in the cell membrane. The catalysed reaction is [protein]-peptidylproline (omega=180) = [protein]-peptidylproline (omega=0). Its function is as follows. Plays a major role in protein secretion by helping the post-translocational extracellular folding of several secreted proteins. The chain is Foldase protein PrsA from Streptococcus agalactiae serotype V (strain ATCC BAA-611 / 2603 V/R).